Reading from the N-terminus, the 190-residue chain is Pancreatic IgW, short secretory form (190 aa).

The 93-residue stretch at 53–145 folds into the Ig-like C1-type domain; the sequence is PNITALVPSV…PPSNFRSMIS (93 aa). Residue Asn54 is glycosylated (N-linked (GlcNAc...) asparagine). Residues Cys74 and Cys131 are joined by a disulfide bond. Asn179 is a glycosylation site (N-linked (GlcNAc...) asparagine).

As to expression, expressed in pancreas, spleen, epigonal organ and at low levels in several other tissues.

Its subcellular location is the secreted. The polypeptide is Pancreatic IgW, short secretory form (Ginglymostoma cirratum (Nurse shark)).